A 471-amino-acid polypeptide reads, in one-letter code: 3-isopropylmalate dehydratase large subunit (471 aa).

[4Fe-4S] cluster is bound by residues cysteine 349, cysteine 409, and cysteine 412.

The protein belongs to the aconitase/IPM isomerase family. LeuC type 1 subfamily. In terms of assembly, heterodimer of LeuC and LeuD. The cofactor is [4Fe-4S] cluster.

The enzyme catalyses (2R,3S)-3-isopropylmalate = (2S)-2-isopropylmalate. Its pathway is amino-acid biosynthesis; L-leucine biosynthesis; L-leucine from 3-methyl-2-oxobutanoate: step 2/4. Its function is as follows. Catalyzes the isomerization between 2-isopropylmalate and 3-isopropylmalate, via the formation of 2-isopropylmaleate. The chain is 3-isopropylmalate dehydratase large subunit from Aliivibrio fischeri (strain MJ11) (Vibrio fischeri).